The chain runs to 245 residues: rRNA adenine N-6-methyltransferase (245 aa).

Residues N10, L12, G37, E58, D83, and N100 each contribute to the S-adenosyl-L-methionine site.

The protein belongs to the class I-like SAM-binding methyltransferase superfamily. rRNA adenine N(6)-methyltransferase family.

It catalyses the reaction adenosine(2085) in 23S rRNA + 2 S-adenosyl-L-methionine = N(6)-dimethyladenosine(2085) in 23S rRNA + 2 S-adenosyl-L-homocysteine + 2 H(+). Its function is as follows. This protein produces a dimethylation of the adenine residue at position 2085 in 23S rRNA, resulting in reduced affinity between ribosomes and macrolide-lincosamide-streptogramin B antibiotics. The sequence is that of rRNA adenine N-6-methyltransferase (ermBC) from Escherichia coli.